Consider the following 786-residue polypeptide: DNA repair and recombination protein RAD54-like (786 aa).

Residues 2–9 (RRSLAPSQ) are required for chromatin remodeling, strand pairing activities and coupling of ATPase activity. At threonine 22 the chain carries Phosphothreonine. A Helicase ATP-binding domain is found at 165–340 (EGKRGSFNGC…FSLVNFVNPE (176 aa)). 178 to 185 (DEMGLGKT) is a binding site for ATP. The DEGH box motif lies at 291-294 (DEGH). Residues 497–654 (LLDFMLAAIR…NNESVEKHFT (158 aa)) form the Helicase C-terminal domain. Residues 738–786 (EAKPAATTTDEDEELSDSKRKAKKTLASDDDDDEDFVLNCSSGEEFSGF) are disordered. A compositionally biased stretch (polar residues) spans 776 to 786 (NCSSGEEFSGF).

The protein belongs to the SNF2/RAD54 helicase family. In terms of assembly, interacts (via N-terminus) with spn-A/Rad51.

Its subcellular location is the nucleus. Functionally, involved in mitotic DNA repair and meiotic recombination. Functions in the recombinational DNA repair pathway. Essential for interhomolog gene conversion (GC), but may have a less important role in intersister GC than spn-A/Rad51. In the presence of DNA, spn-A/Rad51 enhances the ATPase activity of okr/Rad54. The chain is DNA repair and recombination protein RAD54-like from Drosophila grimshawi (Hawaiian fruit fly).